The following is a 107-amino-acid chain: uncharacterized protein (107 aa).

2 helical membrane passes run 14–34 (YLAE…IVAW) and 68–88 (FFVF…LVPI).

It localises to the cell membrane. This is an uncharacterized protein from Haemophilus influenzae (strain ATCC 51907 / DSM 11121 / KW20 / Rd).